A 111-amino-acid chain; its full sequence is PSGYAVREAGPPAYYRPNSDNRRQGGRERLASTSDKGSMAVESAKETRYCAVCNDYASGYHYGVWSCEGCKAFFKRSIQGHNDYMCPATNQCTIDKNRRKSCQACRLRKCY.

The tract at residues 1–42 (PSGYAVREAGPPAYYRPNSDNRRQGGRERLASTSDKGSMAVE) is disordered. Positions 1–49 (PSGYAVREAGPPAYYRPNSDNRRQGGRERLASTSDKGSMAVESAKETRY) are modulating. Basic and acidic residues predominate over residues 19-30 (SDNRRQGGRERL). Ser-32 is subject to Phosphoserine. 2 consecutive NR C4-type zinc fingers follow at residues 50–70 (CAVC…CEGC) and 86–110 (CPAT…LRKC). The segment at residues 50 to 111 (CAVCNDYASG…CQACRLRKCY (62 aa)) is a DNA-binding region (nuclear receptor).

It belongs to the nuclear hormone receptor family. NR3 subfamily. As to quaternary structure, binds DNA as a homodimer. Can form a heterodimer with ESR2. Interacts with coactivator NCOA5. Interacts with PELP1, the interaction is enhanced by 17-beta-estradiol; the interaction increases ESR1 transcriptional activity. Interacts with NCOA7; the interaction is ligand-inducible. Interacts with AKAP13, CUEDC2, HEXIM1, KDM5A, MAP1S, SMARD1, and UBE1C. Interacts with MUC1; the interaction is stimulated by 7 beta-estradiol (E2) and enhances ESR1-mediated transcription. Interacts with DNTTIP2, and UIMC1. Interacts with KMT2D/MLL2. Interacts with ATAD2; the interaction is enhanced by estradiol. Interacts with KIF18A and LDB1. Interacts with RLIM (via its C-terminus). Interacts with MACROD1. Interacts with SH2D4A and PLCG. Interacts with SH2D4A; the interaction blocks binding to PLCG and inhibits estrogen-induced cell proliferation. Interacts with DYNLL1. Interacts with CCDC62; the interaction requires estradiol and appears to enhance the transcription of target genes. Interacts with NR2C1; the interaction prevents homodimerization of ESR1 and suppresses its transcriptional activity and cell growth. Interacts with DNAAF4. Interacts with PRMT2. Interacts with RBFOX2. Interacts with EP300; the interaction is estrogen-dependent and enhanced by CITED1. Interacts with CITED1; the interaction is estrogen-dependent. Interacts with FAM120B, FOXL2, PHB2 and SLC30A9. Interacts with coactivators NCOA3 and NCOA6. Interacts with STK3/MST2 only in the presence of SAV1 and vice-versa. Binds to CSNK1D. Interacts with NCOA2; NCOA2 can interact with ESR1 AF-1 and AF-2 domains simultaneously and mediate their transcriptional synergy. Interacts with DDX5. Interacts with NCOA1; the interaction seems to require a self-association of N-terminal and C-terminal regions. Interacts with ZNF366, DDX17, NFKB1, RELA, SP1 and SP3. Interacts with NRIP1. Interacts with GPER1; the interaction occurs in an estrogen-dependent manner. Interacts with CLOCK and the interaction is stimulated by estrogen. Interacts with TRIP4 (ufmylated); estrogen dependent. Interacts with LMTK3; the interaction phosphorylates ESR1 (in vitro) and protects it against proteasomal degradation. Interacts with CCAR2 (via N-terminus) in a ligand-independent manner. Interacts with ZFHX3. Interacts with SFR1 in a ligand-dependent and -independent manner. Interacts with DCAF13, LATS1 and DCAF1; regulates ESR1 ubiquitination and ubiquitin-mediated proteasomal degradation. Interacts (via DNA-binding domain) with POU4F2 (C-terminus); this interaction increases the estrogen receptor ESR1 transcriptional activity in a DNA- and ligand 17-beta-estradiol-independent manner. Interacts with ESRRB isoform 1. Interacts with UBE3A and WBP2. Interacts with GTF2B. Interacts with RBM39. In the absence of hormonal ligand, interacts with TACC1. Interacts with PI3KR1 or PI3KR2 and PTK2/FAK1. Interacts with SRC. Interacts with BAG1; the interaction is promoted in the absence of estradiol (17-beta-estradiol/E2). Interacts with and ubiquitinated by STUB1; the interaction is promoted in the absence of estradiol (17-beta-estradiol/E2). Interacts with NEDD8. Ubiquitinated; regulated by LATS1 via DCAF1 it leads to ESR1 proteasomal degradation. Deubiquitinated by OTUB1. Ubiquitinated by STUB1/CHIP; in the CA1 hippocampal region following loss of endogenous circulating estradiol (17-beta-estradiol/E2). Ubiquitinated by UBR5, leading to its degradation: UBR5 specifically recognizes and binds ligand-bound ESR1 when it is not associated with coactivators (NCOAs). In presence of NCOAs, the UBR5-degron is not accessible, preventing its ubiquitination and degradation. In terms of processing, dimethylated by PRMT1. Demethylated by JMJD6. Post-translationally, palmitoylated by ZDHHC7 and ZDHHC21. This modification is required for plasma membrane targeting and for rapid intracellular signaling via ERK and AKT kinases and cAMP generation, but not for signaling mediated by the nuclear hormone receptor. Phosphorylated by cyclin A/CDK2 and CK1. Phosphorylation probably enhances transcriptional activity. Dephosphorylation by PPP5C inhibits its transactivation activity. Phosphorylated by LMTK3 (in vitro).

Its subcellular location is the nucleus. It localises to the cytoplasm. It is found in the golgi apparatus. The protein localises to the cell membrane. Nuclear hormone receptor. The steroid hormones and their receptors are involved in the regulation of eukaryotic gene expression and affect cellular proliferation and differentiation in target tissues. Ligand-dependent nuclear transactivation involves either direct homodimer binding to a palindromic estrogen response element (ERE) sequence or association with other DNA-binding transcription factors, such as AP-1/c-Jun, c-Fos, ATF-2, Sp1 and Sp3, to mediate ERE-independent signaling. Ligand binding induces a conformational change allowing subsequent or combinatorial association with multiprotein coactivator complexes through LXXLL motifs of their respective components. Mutual transrepression occurs between the estrogen receptor (ER) and NF-kappa-B in a cell-type specific manner. Decreases NF-kappa-B DNA-binding activity and inhibits NF-kappa-B-mediated transcription from the IL6 promoter and displace RELA/p65 and associated coregulators from the promoter. Recruited to the NF-kappa-B response element of the CCL2 and IL8 promoters and can displace CREBBP. Present with NF-kappa-B components RELA/p65 and NFKB1/p50 on ERE sequences. Can also act synergistically with NF-kappa-B to activate transcription involving respective recruitment adjacent response elements; the function involves CREBBP. Can activate the transcriptional activity of TFF1. Also mediates membrane-initiated estrogen signaling involving various kinase cascades. Essential for MTA1-mediated transcriptional regulation of BRCA1 and BCAS3. Maintains neuronal survival in response to ischemic reperfusion injury when in the presence of circulating estradiol (17-beta-estradiol/E2). This Ovis aries (Sheep) protein is Estrogen receptor (ESR1).